The following is a 369-amino-acid chain: MKTPTLGQLATENGAQVVGDPDLAVVGLAPLDQAGPGDLSFLSNPLYLPQALASAAGAVIVSPADLERIRADGQAEGRNWLVARNPYVCFARVAQRFDRAANADSRTGIDPRASVAPDAVVPASCFIGPNVVIESGARLGERVRILANAFIGASAEIGEDTLIYANVSVYHRCVIGARNILHSGAVIGADGFGFAPDIGPTGVEYVKIPQVGRAVLGNDVEIGANTAVDRGAMADTVIEDGCKIDNQVQIAHNVHVGAHTVIAGTAAVSGSTKIGRFCVIGGAANFSGHLNIADRTTVSGGTSITKSITKPGGHYTSVFPFTSHGEWERNAAIVRGLSKLRERVVQLERRQRGENNAPAQNKQDEEKSS.

H252 functions as the Proton acceptor in the catalytic mechanism. Positions 348–369 (ERRQRGENNAPAQNKQDEEKSS) are disordered.

It belongs to the transferase hexapeptide repeat family. LpxD subfamily. As to quaternary structure, homotrimer.

The catalysed reaction is a UDP-3-O-[(3R)-3-hydroxyacyl]-alpha-D-glucosamine + a (3R)-hydroxyacyl-[ACP] = a UDP-2-N,3-O-bis[(3R)-3-hydroxyacyl]-alpha-D-glucosamine + holo-[ACP] + H(+). Its pathway is bacterial outer membrane biogenesis; LPS lipid A biosynthesis. Catalyzes the N-acylation of UDP-3-O-acylglucosamine using 3-hydroxyacyl-ACP as the acyl donor. Is involved in the biosynthesis of lipid A, a phosphorylated glycolipid that anchors the lipopolysaccharide to the outer membrane of the cell. The sequence is that of UDP-3-O-acylglucosamine N-acyltransferase from Cupriavidus metallidurans (strain ATCC 43123 / DSM 2839 / NBRC 102507 / CH34) (Ralstonia metallidurans).